Here is a 370-residue protein sequence, read N- to C-terminus: Cytochrome b (370 aa).

4 helical membrane passes run 25 to 45 (FGSM…FLAV), 69 to 90 (WLMQ…YIHI), 105 to 125 (WLSG…GYVL), and 170 to 190 (FFAL…LHVI). Residues histidine 75 and histidine 89 each coordinate heme b. Residues histidine 174 and histidine 188 each coordinate heme b. Residue histidine 193 coordinates a ubiquinone. A run of 4 helical transmembrane segments spans residues 218 to 238 (YKDL…VSFS), 280 to 300 (LGGA…PFTH), 312 to 332 (FMQM…WTAT), and 339 to 358 (FTLI…ISNP).

Belongs to the cytochrome b family. In terms of assembly, the cytochrome bc1 complex contains 3 respiratory subunits (MT-CYB, CYC1 and UQCRFS1), 2 core proteins (UQCRC1 and UQCRC2) and probably 6 low-molecular weight proteins. Requires heme b as cofactor.

The protein resides in the mitochondrion inner membrane. Component of the ubiquinol-cytochrome c reductase complex (complex III or cytochrome b-c1 complex) that is part of the mitochondrial respiratory chain. The b-c1 complex mediates electron transfer from ubiquinol to cytochrome c. Contributes to the generation of a proton gradient across the mitochondrial membrane that is then used for ATP synthesis. This is Cytochrome b (MT-CYB) from Eunectes murinus (Green anaconda).